The chain runs to 267 residues: tRNA pseudouridine synthase A (267 aa).

Asp53 functions as the Nucleophile in the catalytic mechanism. Tyr111 is a substrate binding site.

Belongs to the tRNA pseudouridine synthase TruA family. In terms of assembly, homodimer.

It catalyses the reaction uridine(38/39/40) in tRNA = pseudouridine(38/39/40) in tRNA. In terms of biological role, formation of pseudouridine at positions 38, 39 and 40 in the anticodon stem and loop of transfer RNAs. This chain is tRNA pseudouridine synthase A, found in Alcanivorax borkumensis (strain ATCC 700651 / DSM 11573 / NCIMB 13689 / SK2).